A 194-amino-acid polypeptide reads, in one-letter code: Holliday junction branch migration complex subunit RuvA (194 aa).

The tract at residues 1–63 is domain I; that stretch reads MFEYLYGTVE…EDTYKLIGFL (63 aa). The segment at 64–142 is domain II; it reads DERDRKIFEL…NLTYTEEETV (79 aa). The tract at residues 143–147 is flexible linker; that stretch reads SMDML. The domain III stretch occupies residues 147-194; the sequence is LEDLVLALEGLGYNKKEIDKTLEKIDLNKFSSLEDAIKGILKNMRIGD.

It belongs to the RuvA family. Homotetramer. Forms an RuvA(8)-RuvB(12)-Holliday junction (HJ) complex. HJ DNA is sandwiched between 2 RuvA tetramers; dsDNA enters through RuvA and exits via RuvB. An RuvB hexamer assembles on each DNA strand where it exits the tetramer. Each RuvB hexamer is contacted by two RuvA subunits (via domain III) on 2 adjacent RuvB subunits; this complex drives branch migration. In the full resolvosome a probable DNA-RuvA(4)-RuvB(12)-RuvC(2) complex forms which resolves the HJ.

The protein localises to the cytoplasm. Its function is as follows. The RuvA-RuvB-RuvC complex processes Holliday junction (HJ) DNA during genetic recombination and DNA repair, while the RuvA-RuvB complex plays an important role in the rescue of blocked DNA replication forks via replication fork reversal (RFR). RuvA specifically binds to HJ cruciform DNA, conferring on it an open structure. The RuvB hexamer acts as an ATP-dependent pump, pulling dsDNA into and through the RuvAB complex. HJ branch migration allows RuvC to scan DNA until it finds its consensus sequence, where it cleaves and resolves the cruciform DNA. The chain is Holliday junction branch migration complex subunit RuvA from Fusobacterium nucleatum subsp. nucleatum (strain ATCC 25586 / DSM 15643 / BCRC 10681 / CIP 101130 / JCM 8532 / KCTC 2640 / LMG 13131 / VPI 4355).